A 473-amino-acid polypeptide reads, in one-letter code: MSFTVAIVGRPNVGKSTLFNRLVGKKLALVDDTPGVTRDRRPGDARLMGLTFTIIDTAGLEEADEESLQGRMRAQTEAAIDEADLSLFVVDAKNGLTPVDTALAEMLRRRGKPVVLVANKSEARGSDSGFYDAYTLGLGEPTPISAEHGEGMLDLRDAIVEAIGKDRAYAKEDVAVTNVDISEAAGEGEDEDEEPLYDDTKPLRVAIVGRPNAGKSTLINRFLGEDRLLTGPEAGITRDSISVEWDWRGRTIKMFDTAGMRRKARVTEKLEKLSVADALRAIRFAETVVIVFDATIPFEKQDLQIVDLVLREGRAAVLAFNKWDMIEDRQAVLADLREKTDRLLPQARGIRAVPISGQTGWGLDKLMQSIIDTDRVWNKRISTAKLNRWLETQQIQHPPPAVSGRRIKLKYMTQVKARPPAFMISCTRSDALPESYTRYLINGLRADFDMPSVPIRIHFRSAENPFEGKKRRT.

EngA-type G domains are found at residues phenylalanine 3–arginine 167 and leucine 203–asparagine 378. GTP contacts are provided by residues glycine 9–serine 16, aspartate 56–leucine 60, asparagine 119–glutamate 122, glycine 209–serine 216, aspartate 256–methionine 260, and asparagine 321–aspartate 324. Residues lysine 379 to glutamate 463 form the KH-like domain.

Belongs to the TRAFAC class TrmE-Era-EngA-EngB-Septin-like GTPase superfamily. EngA (Der) GTPase family. Associates with the 50S ribosomal subunit.

GTPase that plays an essential role in the late steps of ribosome biogenesis. The chain is GTPase Der from Rhizobium leguminosarum bv. trifolii (strain WSM2304).